A 450-amino-acid polypeptide reads, in one-letter code: Glucose-6-phosphate isomerase (450 aa).

E290 functions as the Proton donor in the catalytic mechanism. Residues H311 and K425 contribute to the active site.

Belongs to the GPI family.

It localises to the cytoplasm. It carries out the reaction alpha-D-glucose 6-phosphate = beta-D-fructose 6-phosphate. Its pathway is carbohydrate biosynthesis; gluconeogenesis. It functions in the pathway carbohydrate degradation; glycolysis; D-glyceraldehyde 3-phosphate and glycerone phosphate from D-glucose: step 2/4. Catalyzes the reversible isomerization of glucose-6-phosphate to fructose-6-phosphate. In Leuconostoc mesenteroides subsp. mesenteroides (strain ATCC 8293 / DSM 20343 / BCRC 11652 / CCM 1803 / JCM 6124 / NCDO 523 / NBRC 100496 / NCIMB 8023 / NCTC 12954 / NRRL B-1118 / 37Y), this protein is Glucose-6-phosphate isomerase.